We begin with the raw amino-acid sequence, 361 residues long: MQSSLARPLRPPVLAGRGGRRGLVAVARCHAEAAPPVGTASRAPAGPYTGRDPEVKKPAWLRQRAAQGEKYARLRESIGELKLNTVCVEAQCPNIGECWNGGGGAGGEGDGIATATIMVLGDTCTRGCRFCAVKTSNKPPPPDPLEPLNTALAVASWGVDYVVLTSVDRDDLPDGGSSHFAQTVKALKELKPGILVECLTSDFRGDLEAISSLASSGLDVYAHNIETVRSLQRIVRDPRAGYDQSLAVLKHAKACREGMVTKSSIMLGLGETDEEVKQAMMDLRAIGVDILTLGQYLQPTERHLTVREYVTPEKFQFWKEYGESVGFRYVASGPLVRSSYRAGELFVQNLVRNNKTGSSSS.

Positions 87, 92, 98, 124, 128, 131, and 339 each coordinate [4Fe-4S] cluster. Residues 107–328 form the Radical SAM core domain; sequence GEGDGIATAT…KEYGESVGFR (222 aa).

Belongs to the radical SAM superfamily. Lipoyl synthase family. It depends on [4Fe-4S] cluster as a cofactor.

It is found in the plastid. The protein localises to the chloroplast. The enzyme catalyses [[Fe-S] cluster scaffold protein carrying a second [4Fe-4S](2+) cluster] + N(6)-octanoyl-L-lysyl-[protein] + 2 oxidized [2Fe-2S]-[ferredoxin] + 2 S-adenosyl-L-methionine + 4 H(+) = [[Fe-S] cluster scaffold protein] + N(6)-[(R)-dihydrolipoyl]-L-lysyl-[protein] + 4 Fe(3+) + 2 hydrogen sulfide + 2 5'-deoxyadenosine + 2 L-methionine + 2 reduced [2Fe-2S]-[ferredoxin]. Its pathway is protein modification; protein lipoylation via endogenous pathway; protein N(6)-(lipoyl)lysine from octanoyl-[acyl-carrier-protein]: step 2/2. Functionally, catalyzes the radical-mediated insertion of two sulfur atoms into the C-6 and C-8 positions of the octanoyl moiety bound to the lipoyl domains of lipoate-dependent enzymes, thereby converting the octanoylated domains into lipoylated derivatives. The chain is Lipoyl synthase 1, chloroplastic from Zea mays (Maize).